The following is a 350-amino-acid chain: Biotin synthase (350 aa).

The Radical SAM core domain occupies 38–256; the sequence is NHVQVSTLLS…IAVARIMMPE (219 aa). [4Fe-4S] cluster contacts are provided by Cys53, Cys57, and Cys60. Positions 97, 128, 188, and 260 each coordinate [2Fe-2S] cluster.

The protein belongs to the radical SAM superfamily. Biotin synthase family. Homodimer. It depends on [4Fe-4S] cluster as a cofactor. [2Fe-2S] cluster serves as cofactor.

It catalyses the reaction (4R,5S)-dethiobiotin + (sulfur carrier)-SH + 2 reduced [2Fe-2S]-[ferredoxin] + 2 S-adenosyl-L-methionine = (sulfur carrier)-H + biotin + 2 5'-deoxyadenosine + 2 L-methionine + 2 oxidized [2Fe-2S]-[ferredoxin]. It participates in cofactor biosynthesis; biotin biosynthesis; biotin from 7,8-diaminononanoate: step 2/2. In terms of biological role, catalyzes the conversion of dethiobiotin (DTB) to biotin by the insertion of a sulfur atom into dethiobiotin via a radical-based mechanism. This Aliivibrio fischeri (strain ATCC 700601 / ES114) (Vibrio fischeri) protein is Biotin synthase.